A 131-amino-acid chain; its full sequence is Ribonuclease P protein component (131 aa).

It belongs to the RnpA family. Consists of a catalytic RNA component (M1 or rnpB) and a protein subunit.

It carries out the reaction Endonucleolytic cleavage of RNA, removing 5'-extranucleotides from tRNA precursor.. Its function is as follows. RNaseP catalyzes the removal of the 5'-leader sequence from pre-tRNA to produce the mature 5'-terminus. It can also cleave other RNA substrates such as 4.5S RNA. The protein component plays an auxiliary but essential role in vivo by binding to the 5'-leader sequence and broadening the substrate specificity of the ribozyme. The chain is Ribonuclease P protein component from Cyanothece sp. (strain PCC 7425 / ATCC 29141).